The following is an 80-amino-acid chain: Cytochrome c oxidase subunit 7A1, mitochondrial (80 aa).

The transit peptide at 1-21 directs the protein to the mitochondrion; that stretch reads MRALRVSQALVRSFSSTARNR. Residues 22-46 are Mitochondrial matrix-facing; it reads FENRVAEKQKLFQEDNGLPVHLKGG. The helical transmembrane segment at 47–75 threads the bilayer; it reads ATDNILYRVTMTLCLGGTLYSLYCLGWAS. Residues 76–80 lie on the Mitochondrial intermembrane side of the membrane; sequence FPHKK.

It belongs to the cytochrome c oxidase VIIa family. As to quaternary structure, component of the complex IV (CIV, cytochrome c oxidase), a multisubunit enzyme composed of 14 subunits. The complex is composed of a catalytic core of 3 subunits MT-CO1, MT-CO2 and MT-CO3, encoded in the mitochondrial DNA, and 11 supernumerary subunits COX4I1 (or COX4I2), COX5A, COX5B, COX6A2 (or COX6A1), COX6B1 (or COX6B2), COX6C, COX7A1 (or COX7A2), COX7B, COX7C, COX8B and NDUFA4, which are encoded in the nuclear genome. The complex exists as a monomer or a dimer and forms supercomplexes (SCs) in the inner mitochondrial membrane with NADH-ubiquinone oxidoreductase (complex I, CI) and ubiquinol-cytochrome c oxidoreductase (cytochrome b-c1 complex, complex III, CIII), resulting in different assemblies (supercomplex SCI(1)III(2)IV(1) and megacomplex MCI(2)III(2)IV(2)).

It localises to the mitochondrion inner membrane. It functions in the pathway energy metabolism; oxidative phosphorylation. Its function is as follows. Component of the mitochondrial respiratory complex IV (CIV, also named cytochrome c oxidase complex), the last enzyme in the mitochondrial electron transport chain which drives oxidative phosphorylation. The CIV complex is the component of the respiratory chain that catalyzes the reduction of oxygen to water. Acts as an assembly factor that specifically drives the homodimerization of CIV complexes, mediating the formation of mitochondrial respiratory supercomplexes (respirasomes) containing two CIV: supercomplxes with two molecules of CIV show improved activity. Despite being highly expressed in brown adipose tissue, not required for thermogenesis. The sequence is that of Cytochrome c oxidase subunit 7A1, mitochondrial (COX7A1) from Bos taurus (Bovine).